A 200-amino-acid chain; its full sequence is Probable GTP-binding protein EngB (200 aa).

The region spanning 26 to 200 is the EngB-type G domain; sequence SIPEIAIAGR…IYEIAQCIKK (175 aa). GTP-binding positions include 34–41, 61–65, 80–83, 147–150, and 179–181; these read GRSNVGKS, GCTKQ, DLPG, TKID, and TSS. Mg(2+) contacts are provided by Ser-41 and Thr-63.

Belongs to the TRAFAC class TrmE-Era-EngA-EngB-Septin-like GTPase superfamily. EngB GTPase family. Mg(2+) is required as a cofactor.

Functionally, necessary for normal cell division and for the maintenance of normal septation. This chain is Probable GTP-binding protein EngB, found in Ehrlichia chaffeensis (strain ATCC CRL-10679 / Arkansas).